Consider the following 166-residue polypeptide: MLSKNLLEALNDQMNHEYFAAHAYMAMAAYCDKESYEGFANFFIQQAKEERFHGQKIYNYINDRGAHAEFRAVSAPKIDFSSILETFKDSLSQEQEVTRRFYNLSEIARQDKDYATISFLNWFLDEQVEEEAMFETHINYLTRIGDDSNALYLYEKELGTRTFDEE.

The region spanning 2-145 (LSKNLLEALN…THINYLTRIG (144 aa)) is the Ferritin-like diiron domain. 5 residues coordinate Fe cation: Glu-17, Glu-50, His-53, Glu-94, and Gln-127.

This sequence belongs to the ferritin family. Prokaryotic subfamily.

The protein localises to the cytoplasm. The catalysed reaction is 4 Fe(2+) + O2 + 6 H2O = 4 iron(III) oxide-hydroxide + 12 H(+). Functionally, iron-storage protein. In Staphylococcus aureus (strain MRSA252), this protein is Bacterial non-heme ferritin (ftnA).